We begin with the raw amino-acid sequence, 306 residues long: HTH-type transcriptional regulator AlkR (306 aa).

The 99-residue stretch at 207-305 (SNALAAIHAY…EQSPKHYRQQ (99 aa)) folds into the HTH araC/xylS-type domain. DNA-binding regions (H-T-H motif) lie at residues 224–245 (ESLADQCCMSRSKFATLFQSIV) and 272–295 (IQQIANKVGYSSETAFSQAFKRQF).

The protein operates within hydrocarbon metabolism; alkane degradation. In terms of biological role, this protein activates the expression of the alkane 1-monooxygenase AlkM. The polypeptide is HTH-type transcriptional regulator AlkR (alkR) (Acinetobacter baylyi (strain ATCC 33305 / BD413 / ADP1)).